A 556-amino-acid polypeptide reads, in one-letter code: 2-methylpropanoate--CoA ligase CCL4 (556 aa).

Residues 192-200 (TSGTTSSPK), 325-330 (HGYGLT), D423, 435-438 (IKDR), and K531 contribute to the ATP site. Residues 260-325 (DSEIIYDMIK…TESLGFAVSH (66 aa)) are SBD1. The segment at 326–402 (GYGLTETAGL…LRGGSVMLGY (77 aa)) is SBD2.

Belongs to the ATP-dependent AMP-binding enzyme family. As to expression, mostly expressed in old leaves and in cones and glandular trichomes (lupulin glands) after flowering, and, to a lower extent, in stems, young leaves and flowers.

It localises to the cytoplasm. The protein resides in the cytosol. It catalyses the reaction 2-methylpropanoate + ATP + CoA = 2-methylpropanoyl-CoA + AMP + diphosphate. The catalysed reaction is propanoate + ATP + CoA = propanoyl-CoA + AMP + diphosphate. The enzyme catalyses butanoate + ATP + CoA = butanoyl-CoA + AMP + diphosphate. It carries out the reaction 2-methylbutanoate + ATP + CoA = 2-methylbutanoyl-CoA + AMP + diphosphate. The protein operates within secondary metabolite biosynthesis. Its function is as follows. Involved in the biosynthesis of prenylated phenolics natural products which contribute to the bitter taste of beer and display broad biological activities. Catalyzes the ligation of CoA on 2-methylpropanoate (isobutyric acid) and 2-methylbutanoate to produce 2-methylpropanoyl-CoA and 2-methylbutanoyl-CoA, respectively. Can also use propanoate and butanoate as substrates with a lower efficiency. The chain is 2-methylpropanoate--CoA ligase CCL4 from Humulus lupulus (European hop).